We begin with the raw amino-acid sequence, 439 residues long: GTPase Der (439 aa).

2 consecutive EngA-type G domains span residues 2 to 167 (PTVL…ESKG) and 182 to 358 (IRVS…KSLH). GTP is bound by residues 8 to 15 (GKSNVGKS), 55 to 59 (DTGGI), 118 to 121 (NKSE), 188 to 195 (GRPNAGKS), 235 to 239 (DTAGL), and 301 to 304 (NKID). One can recognise a KH-like domain in the interval 359–439 (YRVQTSAVNS…PIFLKFKSRH (81 aa)).

This sequence belongs to the TRAFAC class TrmE-Era-EngA-EngB-Septin-like GTPase superfamily. EngA (Der) GTPase family. In terms of assembly, associates with the 50S ribosomal subunit.

Its function is as follows. GTPase that plays an essential role in the late steps of ribosome biogenesis. The chain is GTPase Der from Thermosipho africanus (strain TCF52B).